The sequence spans 142 residues: Hemoglobin subunit alpha (142 aa).

One can recognise a Globin domain in the interval 2-142; sequence VLSPADKTNV…VSTVLTSKYR (141 aa). Serine 4 is modified (phosphoserine). Lysine 8 is subject to N6-succinyllysine. A Phosphothreonine modification is found at threonine 9. Lysine 12 is modified (N6-succinyllysine). At lysine 17 the chain carries N6-acetyllysine; alternate. Lysine 17 carries the N6-succinyllysine; alternate modification. Phosphotyrosine is present on tyrosine 25. Serine 36 is modified (phosphoserine). The residue at position 41 (lysine 41) is an N6-succinyllysine. Serine 50 is modified (phosphoserine). Histidine 59 lines the O2 pocket. Histidine 88 contributes to the heme b binding site. The residue at position 103 (serine 103) is a Phosphoserine. Residue threonine 109 is modified to Phosphothreonine. Phosphoserine occurs at positions 125 and 132. Phosphothreonine occurs at positions 135 and 138. Phosphoserine is present on serine 139.

The protein belongs to the globin family. Heterotetramer of two alpha chains and two beta chains. In terms of tissue distribution, red blood cells.

Involved in oxygen transport from the lung to the various peripheral tissues. Its function is as follows. Hemopressin acts as an antagonist peptide of the cannabinoid receptor CNR1. Hemopressin-binding efficiently blocks cannabinoid receptor CNR1 and subsequent signaling. The protein is Hemoglobin subunit alpha (HBA) of Piliocolobus badius (Western red colobus).